A 156-amino-acid polypeptide reads, in one-letter code: Small ribosomal subunit protein uS7 (156 aa).

The protein belongs to the universal ribosomal protein uS7 family. As to quaternary structure, part of the 30S ribosomal subunit. Contacts proteins S9 and S11.

One of the primary rRNA binding proteins, it binds directly to 16S rRNA where it nucleates assembly of the head domain of the 30S subunit. Is located at the subunit interface close to the decoding center, probably blocks exit of the E-site tRNA. The sequence is that of Small ribosomal subunit protein uS7 from Magnetococcus marinus (strain ATCC BAA-1437 / JCM 17883 / MC-1).